Here is a 487-residue protein sequence, read N- to C-terminus: NADH-quinone oxidoreductase subunit N (487 aa).

Transmembrane regions (helical) follow at residues leucine 8–isoleucine 28, phenylalanine 35–valine 55, glycine 78–tyrosine 98, glutamate 104–histidine 124, leucine 125–tyrosine 145, tyrosine 159–alanine 179, isoleucine 203–phenylalanine 223, proline 235–methionine 255, leucine 271–glutamine 291, leucine 297–glutamine 317, isoleucine 328–leucine 348, alanine 376–glycine 396, leucine 409–leucine 428, and alanine 451–isoleucine 471.

The protein belongs to the complex I subunit 2 family. NDH-1 is composed of 13 different subunits. Subunits NuoA, H, J, K, L, M, N constitute the membrane sector of the complex.

Its subcellular location is the cell inner membrane. The enzyme catalyses a quinone + NADH + 5 H(+)(in) = a quinol + NAD(+) + 4 H(+)(out). NDH-1 shuttles electrons from NADH, via FMN and iron-sulfur (Fe-S) centers, to quinones in the respiratory chain. The immediate electron acceptor for the enzyme in this species is believed to be ubiquinone. Couples the redox reaction to proton translocation (for every two electrons transferred, four hydrogen ions are translocated across the cytoplasmic membrane), and thus conserves the redox energy in a proton gradient. This is NADH-quinone oxidoreductase subunit N from Yersinia pestis bv. Antiqua (strain Angola).